The sequence spans 292 residues: Probable 2-(5''-triphosphoribosyl)-3'-dephosphocoenzyme-A synthase (292 aa).

It belongs to the CitG/MdcB family.

The enzyme catalyses 3'-dephospho-CoA + ATP = 2'-(5''-triphospho-alpha-D-ribosyl)-3'-dephospho-CoA + adenine. This Shigella flexneri protein is Probable 2-(5''-triphosphoribosyl)-3'-dephosphocoenzyme-A synthase.